We begin with the raw amino-acid sequence, 359 residues long: Photosystem II protein D1 1 (359 aa).

Transmembrane regions (helical) follow at residues 29 to 46 (YVGW…AATI), 118 to 133 (HFLI…EWEL), and 142 to 156 (WICV…AASA). Residue H118 coordinates chlorophyll a. Y126 serves as a coordination point for pheophytin a. Residues D170 and E189 each coordinate [CaMn4O5] cluster. The helical transmembrane segment at 197-218 (FHMLGVAGVFGGSLFSAMHGSL) threads the bilayer. H198 is a chlorophyll a binding site. A quinone is bound by residues H215 and 264 to 265 (SF). Residue H215 participates in Fe cation binding. Residue H272 coordinates Fe cation. Residues 274-288 (FLAAWPVVGIWFTAL) form a helical membrane-spanning segment. [CaMn4O5] cluster-binding residues include H332, E333, D342, and A344. Residues 345–359 (AAESTPVALQAPAIG) constitute a propeptide that is removed on maturation.

Belongs to the reaction center PufL/M/PsbA/D family. As to quaternary structure, PSII is composed of 1 copy each of membrane proteins PsbA, PsbB, PsbC, PsbD, PsbE, PsbF, PsbH, PsbI, PsbJ, PsbK, PsbL, PsbM, PsbT, PsbX, PsbY, PsbZ, Psb30/Ycf12, peripheral proteins PsbO, CyanoQ (PsbQ), PsbU, PsbV and a large number of cofactors. It forms dimeric complexes. The D1/D2 heterodimer binds P680, chlorophylls that are the primary electron donor of PSII, and subsequent electron acceptors. It shares a non-heme iron and each subunit binds pheophytin, quinone, additional chlorophylls, carotenoids and lipids. D1 provides most of the ligands for the Mn4-Ca-O5 cluster of the oxygen-evolving complex (OEC). There is also a Cl(-1) ion associated with D1 and D2, which is required for oxygen evolution. The PSII complex binds additional chlorophylls, carotenoids and specific lipids. serves as cofactor. Tyr-161 forms a radical intermediate that is referred to as redox-active TyrZ, YZ or Y-Z. In terms of processing, C-terminally processed by CtpA; processing is essential to allow assembly of the oxygen-evolving complex and thus photosynthetic growth.

The protein resides in the cellular thylakoid membrane. It carries out the reaction 2 a plastoquinone + 4 hnu + 2 H2O = 2 a plastoquinol + O2. In terms of biological role, photosystem II (PSII) is a light-driven water:plastoquinone oxidoreductase that uses light energy to abstract electrons from H(2)O, generating O(2) and a proton gradient subsequently used for ATP formation. It consists of a core antenna complex that captures photons, and an electron transfer chain that converts photonic excitation into a charge separation. The D1/D2 (PsbA/PsbD) reaction center heterodimer binds P680, the primary electron donor of PSII as well as several subsequent electron acceptors. The polypeptide is Photosystem II protein D1 1 (Synechococcus sp. (strain CC9605)).